The sequence spans 811 residues: MEGVGAVRFWLVVCGCLAFPPRAESVCPERCDCQHPQHLLCTNRGLRAVPKTSSLPSPQDVLTYSLGGNFITNITAFDFHRLGQLRRLDLQYNQIRSLHPKTFEKLSRLEELYLGNNLLQALAPGTLAPLRKLRILYANGNEIGRLSRGSFEGLESLVKLRLDGNVLGALPDAVFAPLGNLLYLHLEANRIRFLGKNAFTQLGKLRFLNLSANELQPSLRHAATFVPLRSLSTLILSANSLQHLGPRVFQHLPRLGLLSLSGNQLTHLAPEAFWGLEALRELRLEGNRLNQLPLTLLEPLHSLEALDLSGNELSALHPATFGHQGRLRELSLRDNALSALSGDIFAASPALYRLDLDGNGWTCDCRLRGLKRWMGNWHSQGRLLTVFVQCRHPPALRGKYLDYLDDQLLQNGSCVDPSPSPTAGSRQWPISTAPGEGMTPPAGLAQELPLQPQPQPQQRGRLLPGVAWAGAAKELVGNRSALRLNRRGPGLQHQSPSAAAASGSAPQSLDLHEKPERGRPTRANLPQTEPTPTSEPASGTPSARDSWQRAAKQRLASEQQGRAVQYDSGVGLPPLVSDPCDFNKFILCNLTVEAVSANSASVRWAVREHRSPRPQGGARFRLLFDRFGQQPKFQRFVYLPERSDSATLHELRGDTPYLVCVEGVLGGRVCPVAPRDHCAGLVTLPEAGGRGGVDYQLLTLVLLAINALLVLLALAAWGSRWLRRKLRARRKGGAPVHVRHMYSTRRPLRSMGTGVSADFSGFQSHRPRTTVCALSEADLIEFPCDRFMDSSGGGTGGSLRREDHLLQRFAD.

A signal peptide spans 1–25; that stretch reads MEGVGAVRFWLVVCGCLAFPPRAES. An LRRNT domain is found at 26–57; the sequence is VCPERCDCQHPQHLLCTNRGLRAVPKTSSLPS. At 26 to 696 the chain is on the extracellular side; the sequence is VCPERCDCQH…AGGRGGVDYQ (671 aa). LRR repeat units follow at residues 61 to 81, 84 to 105, 108 to 129, 132 to 153, 156 to 177, 180 to 201, 204 to 223, 230 to 251, 254 to 275, 278 to 298, 302 to 323, and 326 to 347; these read VLTY…DFHR, QLRR…TFEK, RLEE…TLAP, KLRI…SFEG, SLVK…VFAP, NLLY…AFTQ, KLRF…RHAA, SLST…VFQH, RLGL…AFWG, ALRE…TLLE, SLEA…TFGH, and RLRE…IFAA. Residue Asn73 is glycosylated (N-linked (GlcNAc...) asparagine). Positions 359–416 constitute an LRRCT domain; sequence NGWTCDCRLRGLKRWMGNWHSQGRLLTVFVQCRHPPALRGKYLDYLDDQLLQNGSCVD. Asn411 carries N-linked (GlcNAc...) asparagine glycosylation. Disordered stretches follow at residues 414-460 and 486-562; these read CVDP…QQRG and RRGP…QQGR. Polar residues predominate over residues 421–430; sequence PTAGSRQWPI. Low complexity-rich tracts occupy residues 440 to 460 and 494 to 508; these read PPAG…QQRG and QSPS…APQS. The segment covering 510 to 519 has biased composition (basic and acidic residues); that stretch reads DLHEKPERGR. The segment covering 524–545 has biased composition (polar residues); that stretch reads NLPQTEPTPTSEPASGTPSARD. A glycan (N-linked (GlcNAc...) asparagine) is linked at Asn589. Residues 697-717 traverse the membrane as a helical segment; sequence LLTLVLLAINALLVLLALAAW. At 718-809 the chain is on the cytoplasmic side; it reads GSRWLRRKLR…RREDHLLQRF (92 aa). Residue Ser798 is modified to Phosphoserine.

In terms of assembly, belongs to the lipopolysaccharide (LPS) receptor, a multi-protein complex containing at least CD14, MD-2 and TLR4. Interacts with TLR4; this interaction is greatly enhanced following LPS stimulation. Interacts with LPS. In terms of processing, N-glycolysaled. In terms of tissue distribution, highly expressed in cortical astrocytes and in cerebellar granule neurons.

It is found in the membrane. Its function is as follows. Component of the TLR4 signaling complex. Mediates the innate immune response to bacterial lipopolysaccharide (LPS) leading to cytokine secretion and the inflammatory response. The sequence is that of TLR4 interactor with leucine rich repeats (Tril) from Rattus norvegicus (Rat).